Here is a 286-residue protein sequence, read N- to C-terminus: Bifunctional protein FolD (286 aa).

NADP(+) contacts are provided by residues 160 to 162 (GRS), Ser189, and Thr230.

Belongs to the tetrahydrofolate dehydrogenase/cyclohydrolase family. As to quaternary structure, homodimer.

It catalyses the reaction (6R)-5,10-methylene-5,6,7,8-tetrahydrofolate + NADP(+) = (6R)-5,10-methenyltetrahydrofolate + NADPH. It carries out the reaction (6R)-5,10-methenyltetrahydrofolate + H2O = (6R)-10-formyltetrahydrofolate + H(+). The protein operates within one-carbon metabolism; tetrahydrofolate interconversion. In terms of biological role, catalyzes the oxidation of 5,10-methylenetetrahydrofolate to 5,10-methenyltetrahydrofolate and then the hydrolysis of 5,10-methenyltetrahydrofolate to 10-formyltetrahydrofolate. The protein is Bifunctional protein FolD of Chlamydia pneumoniae (Chlamydophila pneumoniae).